Here is a 256-residue protein sequence, read N- to C-terminus: NifU-like protein, mitochondrial (256 aa).

The short motif at 196-199 (CTSC) is the CxxC motif element.

The protein belongs to the NifU family. In terms of assembly, homodimer; in absence of BOL3, probably bridged by an iron-sulfure cluster. Interacts with BOL3. Interacts with apo-target proteins, such as ACO1, LYS4, ACO2 and SDH2.

It is found in the mitochondrion matrix. Involved in iron homeostasis within the mitochondrion where it is involved in the assembly of iron-sulfur proteins. Together with BOL3, required during the last step of iron-sulfur protein assembly when the iron-sulfur cluster is inserted into the target protein. Required for protecting iron sulfur clusters from oxidative damage. This is NifU-like protein, mitochondrial (NFU1) from Saccharomyces cerevisiae (strain ATCC 204508 / S288c) (Baker's yeast).